The chain runs to 397 residues: Elongation factor Tu (397 aa).

Positions 10–207 (KPHVNIGTIG…ACDSYIEEPE (198 aa)) constitute a tr-type G domain. The tract at residues 19–26 (GHIDHGKT) is G1. Residue 19–26 (GHIDHGKT) coordinates GTP. Thr26 contacts Mg(2+). Positions 60–64 (GITIA) are G2. The G3 stretch occupies residues 81–84 (DCPG). GTP is bound by residues 81–85 (DCPGH) and 136–139 (NKCD). Residues 136-139 (NKCD) form a G4 region. The segment at 174-176 (SAL) is G5.

It belongs to the TRAFAC class translation factor GTPase superfamily. Classic translation factor GTPase family. EF-Tu/EF-1A subfamily. As to quaternary structure, monomer.

Its subcellular location is the cytoplasm. It carries out the reaction GTP + H2O = GDP + phosphate + H(+). In terms of biological role, GTP hydrolase that promotes the GTP-dependent binding of aminoacyl-tRNA to the A-site of ribosomes during protein biosynthesis. The polypeptide is Elongation factor Tu (Maridesulfovibrio salexigens (strain ATCC 14822 / DSM 2638 / NCIMB 8403 / VKM B-1763) (Desulfovibrio salexigens)).